A 63-amino-acid polypeptide reads, in one-letter code: Cytochrome c oxidase subunit 7C, mitochondrial (63 aa).

Residues 1-16 constitute a mitochondrion transit peptide; the sequence is MLGQSIRRFTTSVVRR. At 17-33 the chain is on the mitochondrial matrix side; sequence SHYEEGPGKNLPFSVEN. Position 25 is an N6-acetyllysine; alternate (Lys-25). Lys-25 is subject to N6-succinyllysine; alternate. A helical membrane pass occupies residues 34–60; that stretch reads KWSLLAKMCLYFGSAFATPFLVVRHQL. At 61 to 63 the chain is on the mitochondrial intermembrane side; that stretch reads LKT.

Belongs to the cytochrome c oxidase VIIc family. Component of the cytochrome c oxidase (complex IV, CIV), a multisubunit enzyme composed of 14 subunits. The complex is composed of a catalytic core of 3 subunits MT-CO1, MT-CO2 and MT-CO3, encoded in the mitochondrial DNA, and 11 supernumerary subunits COX4I1 (or COX4I2), COX5A, COX5B, COX6A1 (or COX6A2), COX6B1 (or COX6B2), COX6C, COX7A2 (or COX7A1), COX7B, COX7C, COX8A and NDUFA4, which are encoded in the nuclear genome. The complex exists as a monomer or a dimer and forms supercomplexes (SCs) in the inner mitochondrial membrane with NADH-ubiquinone oxidoreductase (complex I, CI) and ubiquinol-cytochrome c oxidoreductase (cytochrome b-c1 complex, complex III, CIII), resulting in different assemblies (supercomplex SCI(1)III(2)IV(1) and megacomplex MCI(2)III(2)IV(2)). Interacts with RAB5IF.

It localises to the mitochondrion inner membrane. Its pathway is energy metabolism; oxidative phosphorylation. Functionally, component of the cytochrome c oxidase, the last enzyme in the mitochondrial electron transport chain which drives oxidative phosphorylation. The respiratory chain contains 3 multisubunit complexes succinate dehydrogenase (complex II, CII), ubiquinol-cytochrome c oxidoreductase (cytochrome b-c1 complex, complex III, CIII) and cytochrome c oxidase (complex IV, CIV), that cooperate to transfer electrons derived from NADH and succinate to molecular oxygen, creating an electrochemical gradient over the inner membrane that drives transmembrane transport and the ATP synthase. Cytochrome c oxidase is the component of the respiratory chain that catalyzes the reduction of oxygen to water. Electrons originating from reduced cytochrome c in the intermembrane space (IMS) are transferred via the dinuclear copper A center (CU(A)) of subunit 2 and heme A of subunit 1 to the active site in subunit 1, a binuclear center (BNC) formed by heme A3 and copper B (CU(B)). The BNC reduces molecular oxygen to 2 water molecules using 4 electrons from cytochrome c in the IMS and 4 protons from the mitochondrial matrix. In Homo sapiens (Human), this protein is Cytochrome c oxidase subunit 7C, mitochondrial (COX7C).